Here is a 440-residue protein sequence, read N- to C-terminus: Proline--tRNA ligase (440 aa).

This sequence belongs to the class-II aminoacyl-tRNA synthetase family. ProS type 2 subfamily. Homodimer.

It is found in the cytoplasm. It carries out the reaction tRNA(Pro) + L-proline + ATP = L-prolyl-tRNA(Pro) + AMP + diphosphate. Functionally, catalyzes the attachment of proline to tRNA(Pro) in a two-step reaction: proline is first activated by ATP to form Pro-AMP and then transferred to the acceptor end of tRNA(Pro). This is Proline--tRNA ligase from Rhizobium leguminosarum bv. trifolii (strain WSM2304).